A 194-amino-acid chain; its full sequence is MRELLEKIAAEGEVVADGVLKVDRFLNHQVDPHLMKRIGEEFAAQFHRERPTKVLTLESSGISPALMAAYELGVPLVVARKRRPLTMTSEVYCAEVYSFTKKETNEIIVSRPLLDSSDRVLIIDDFLANGQAALGMVEVVRQAGADVVGIGIVIEKAFQDGGRLLRSQGFRVVSLARIASLSDGVIRFHEEVMS.

Xanthine contacts are provided by leucine 20 and asparagine 27. Residue 128–132 coordinates 5-phospho-alpha-D-ribose 1-diphosphate; it reads ANGQA. A xanthine-binding site is contributed by lysine 156.

The protein belongs to the purine/pyrimidine phosphoribosyltransferase family. Xpt subfamily. As to quaternary structure, homodimer.

It is found in the cytoplasm. The catalysed reaction is XMP + diphosphate = xanthine + 5-phospho-alpha-D-ribose 1-diphosphate. The protein operates within purine metabolism; XMP biosynthesis via salvage pathway; XMP from xanthine: step 1/1. In terms of biological role, converts the preformed base xanthine, a product of nucleic acid breakdown, to xanthosine 5'-monophosphate (XMP), so it can be reused for RNA or DNA synthesis. This Geobacillus thermodenitrificans (strain NG80-2) protein is Xanthine phosphoribosyltransferase.